Consider the following 333-residue polypeptide: DNA-directed RNA polymerase subunit alpha (333 aa).

The tract at residues 1–227 is alpha N-terminal domain (alpha-NTD); the sequence is MRKIKVAPFM…VMNKQLSVFN (227 aa). An alpha C-terminal domain (alpha-CTD) region spans residues 247-333; the sequence is ELKPFLAAVD…LVKKLEQLKA (87 aa).

Belongs to the RNA polymerase alpha chain family. In terms of assembly, homodimer. The RNAP catalytic core consists of 2 alpha, 1 beta, 1 beta' and 1 omega subunit. When a sigma factor is associated with the core the holoenzyme is formed, which can initiate transcription.

It catalyses the reaction RNA(n) + a ribonucleoside 5'-triphosphate = RNA(n+1) + diphosphate. Its function is as follows. DNA-dependent RNA polymerase catalyzes the transcription of DNA into RNA using the four ribonucleoside triphosphates as substrates. In Sulfurovum sp. (strain NBC37-1), this protein is DNA-directed RNA polymerase subunit alpha.